The chain runs to 261 residues: 8-demethyl-8-(2,3-dimethoxy-alpha-L-rhamnosyl)-tetracenomycin-C 4'-O-methyltransferase (261 aa).

S-adenosyl-L-methionine-binding positions include 53-54 (TM), 81-85 (ETGVW), 111-115 (DSFEG), Phe167, 185-186 (DG), and Ser191. Residue Asp185 participates in Mg(2+) binding. Residues Asp212 and Asp213 each coordinate Mg(2+).

This sequence belongs to the methyltransferase TylF/MycF family. The cofactor is Mg(2+).

The enzyme catalyses 8-demethyl-8-(2,3-di-O-methyl-alpha-L-rhamnosyl)-tetracenomycin C + S-adenosyl-L-methionine = 8-demethyl-8-(2,3,4-tri-O-methyl-alpha-L-rhamnosyl)-tetracenomycin C + S-adenosyl-L-homocysteine + H(+). Its pathway is antibiotic biosynthesis. Functionally, O-methyltransferase involved in the biosynthesis of the permethylated L-rhamnose moiety of elloramycin, an antitumor polyketide. Mediates the methylation of the hydroxy groups at the 4'-position after the sugar moiety has been attached to the aglycon. This chain is 8-demethyl-8-(2,3-dimethoxy-alpha-L-rhamnosyl)-tetracenomycin-C 4'-O-methyltransferase, found in Streptomyces olivaceus.